A 181-amino-acid polypeptide reads, in one-letter code: K99 fimbrial protein (181 aa).

Residues 1 to 22 (MKKTLLAIILGGMAFATTNASA) form the signal peptide. A disulfide bridge connects residues C38 and C79.

The protein belongs to the fimbrial protein family.

It localises to the fimbrium. Fimbriae (also called pili), polar filaments radiating from the surface of the bacterium to a length of 0.5-1.5 micrometers and numbering 100-300 per cell, enable bacteria to colonize the epithelium of specific host organs. Functionally, fanC is the main component of the K99 fimbriae. This Escherichia coli protein is K99 fimbrial protein (fanC).